The primary structure comprises 280 residues: Protease HtpX (280 aa).

2 helical membrane-spanning segments follow: residues 7–26 (TFILLASLTALLVVIGGLLG) and 30–49 (GMLVALLFAGIMNFSAYWYS). H129 contacts Zn(2+). E130 is an active-site residue. Zn(2+) is bound at residue H133. Helical transmembrane passes span 146–166 (ATIAGAISGIANMFMWLSMFG) and 178–198 (VVGMIMMIVAPLAAGLIQMAI). E203 is a Zn(2+) binding site.

This sequence belongs to the peptidase M48B family. The cofactor is Zn(2+).

It localises to the cell inner membrane. The protein is Protease HtpX of Legionella pneumophila (strain Corby).